Reading from the N-terminus, the 193-residue chain is Acyl-homoserine-lactone synthase (193 aa).

This sequence belongs to the autoinducer synthase family.

The catalysed reaction is a fatty acyl-[ACP] + S-adenosyl-L-methionine = an N-acyl-L-homoserine lactone + S-methyl-5'-thioadenosine + holo-[ACP] + H(+). In terms of biological role, required for the synthesis of N-(3-oxodecanoyl)-L-homoserine lactone (ODHL), an autoinducer molecule which binds to VanR. This is Acyl-homoserine-lactone synthase (vanI) from Vibrio anguillarum (Listonella anguillarum).